The chain runs to 228 residues: U1 small nuclear ribonucleoprotein C (228 aa).

A Matrin-type zinc finger spans residues 4 to 36; sequence YYCEYCDIYLTHSSPVGRRQHVQGRKHISAKIE. Basic and acidic residues predominate over residues 179–190; that stretch reads LVKDNPNEERNG. Residues 179–228 are disordered; sequence LVKDNPNEERNGDSAIANQPSTMHHEEDQDDPANATGGTANNNDNVSINA. The segment covering 211–221 has biased composition (low complexity); it reads ANATGGTANNN.

The protein belongs to the U1 small nuclear ribonucleoprotein C family. As to quaternary structure, U1 snRNP is composed of the 7 core Sm proteins B/B', D1, D2, D3, E, F and G that assemble in a heptameric protein ring on the Sm site of the small nuclear RNA to form the core snRNP, and at least 3 U1 snRNP-specific proteins U1-70K, U1-A and U1-C. U1-C interacts with U1 snRNA and the 5' splice-site region of the pre-mRNA.

The protein localises to the nucleus. Component of the spliceosomal U1 snRNP, which is essential for recognition of the pre-mRNA 5' splice-site and the subsequent assembly of the spliceosome. U1-C is directly involved in initial 5' splice-site recognition for both constitutive and regulated alternative splicing. The interaction with the 5' splice-site seems to precede base-pairing between the pre-mRNA and the U1 snRNA. Stimulates commitment or early (E) complex formation by stabilizing the base pairing of the 5' end of the U1 snRNA and the 5' splice-site region. The polypeptide is U1 small nuclear ribonucleoprotein C (Plasmodium knowlesi (strain H)).